A 1080-amino-acid polypeptide reads, in one-letter code: Ubiquitin-activating enzyme E1 1 (1080 aa).

Over residues 1-14 (MLHKRASEANDKND) the composition is skewed to basic and acidic residues. Disordered regions lie at residues 1–20 (MLHKRASEANDKNDNTIIGS) and 29–50 (RIDFTESSSDKSSSILASGSSR). Over residues 38–49 (DKSSSILASGSS) the composition is skewed to low complexity. ATP-binding positions include alanine 502, aspartate 528, arginine 539, lysine 552, and 600–601 (DN). Cysteine 656 acts as the Glycyl thioester intermediate in catalysis.

This sequence belongs to the ubiquitin-activating E1 family. In terms of assembly, monomer. As to expression, expressed in leaves, flowers, roots and stems. Detected in germinating seeds, cotyledons, hypocotyls, vascular tissues, anthers, filaments, pollen, style, stigma, sepals, petals, ovary, developing ovules, funiculi and silique walls.

It carries out the reaction ATP + ubiquitin + [E1 ubiquitin-activating enzyme]-L-cysteine = AMP + diphosphate + S-ubiquitinyl-[E1 ubiquitin-activating enzyme]-L-cysteine.. It functions in the pathway protein modification; protein ubiquitination. In terms of biological role, activates ubiquitin by first adenylating its C-terminal glycine residue with ATP, and thereafter linking this residue to the side chain of a cysteine residue in E1, yielding a ubiquitin-E1 thioester and free AMP. This Arabidopsis thaliana (Mouse-ear cress) protein is Ubiquitin-activating enzyme E1 1 (UBA1).